We begin with the raw amino-acid sequence, 362 residues long: Peptide chain release factor 1 (362 aa).

Gln237 carries the post-translational modification N5-methylglutamine.

Belongs to the prokaryotic/mitochondrial release factor family. In terms of processing, methylated by PrmC. Methylation increases the termination efficiency of RF1.

It is found in the cytoplasm. In terms of biological role, peptide chain release factor 1 directs the termination of translation in response to the peptide chain termination codons UAG and UAA. The polypeptide is Peptide chain release factor 1 (Vibrio parahaemolyticus serotype O3:K6 (strain RIMD 2210633)).